Here is a 352-residue protein sequence, read N- to C-terminus: Dihydroorotate dehydrogenase (quinone) (352 aa).

Residues 68–72 (AGFDK) and Thr92 contribute to the FMN site. Lys72 is a substrate binding site. Residue 117-121 (NAMGF) coordinates substrate. The FMN site is built by Asn146 and Asn179. Asn179 contacts substrate. Residue Ser182 is the Nucleophile of the active site. Asn184 lines the substrate pocket. FMN is bound by residues Lys215 and Thr243. 244 to 245 (NT) lines the substrate pocket. FMN is bound by residues Gly263, Gly292, and 313–314 (YS).

The protein belongs to the dihydroorotate dehydrogenase family. Type 2 subfamily. Monomer. It depends on FMN as a cofactor.

The protein resides in the cell membrane. The enzyme catalyses (S)-dihydroorotate + a quinone = orotate + a quinol. It functions in the pathway pyrimidine metabolism; UMP biosynthesis via de novo pathway; orotate from (S)-dihydroorotate (quinone route): step 1/1. Functionally, catalyzes the conversion of dihydroorotate to orotate with quinone as electron acceptor. The protein is Dihydroorotate dehydrogenase (quinone) of Sulfurimonas denitrificans (strain ATCC 33889 / DSM 1251) (Thiomicrospira denitrificans (strain ATCC 33889 / DSM 1251)).